The following is a 341-amino-acid chain: NADH-quinone oxidoreductase subunit H (341 aa).

The next 9 membrane-spanning stretches (helical) occupy residues 4–24 (LVNI…LTYF), 38–58 (PSVV…KLLI), 70–90 (ILFI…WAVI), 115–135 (VGVL…IIAG), 161–181 (IGLI…GEMV), 187–207 (MPFW…ISLL), 239–259 (LFFL…TIFF), 275–295 (IPGL…FIWI), and 314–334 (VFLP…LFTG).

This sequence belongs to the complex I subunit 1 family. NDH-1 is composed of 14 different subunits. Subunits NuoA, H, J, K, L, M, N constitute the membrane sector of the complex.

The protein resides in the cell membrane. It carries out the reaction a quinone + NADH + 5 H(+)(in) = a quinol + NAD(+) + 4 H(+)(out). NDH-1 shuttles electrons from NADH, via FMN and iron-sulfur (Fe-S) centers, to quinones in the respiratory chain. The immediate electron acceptor for the enzyme in this species is believed to be ubiquinone. Couples the redox reaction to proton translocation (for every two electrons transferred, four hydrogen ions are translocated across the cytoplasmic membrane), and thus conserves the redox energy in a proton gradient. This subunit may bind ubiquinone. This is NADH-quinone oxidoreductase subunit H from Wolbachia pipientis wMel.